The primary structure comprises 497 residues: uncharacterized protein (497 aa).

Residues D12, T13, and C52 each contribute to the Ca(2+) site. Residue C52 is the Nucleophile of the active site. C52 bears the 3-oxoalanine (Cys) mark. H102 is a catalytic residue. D284 and H285 together coordinate Ca(2+).

The protein belongs to the sulfatase family. Requires Ca(2+) as cofactor. Post-translationally, the conversion to 3-oxoalanine (also known as C-formylglycine, FGly), of a serine or cysteine residue in prokaryotes and of a cysteine residue in eukaryotes, is critical for catalytic activity.

This is an uncharacterized protein from Escherichia coli (strain K12).